The chain runs to 322 residues: Tlg2p-like protein a (322 aa).

Topologically, residues 1-301 are cytoplasmic; that stretch reads MATRNRTLLF…QRHGGMVKCA (301 aa). The stretch at 116–146 forms a coiled coil; it reads KEDQHNIESLTQEITFLLKKSEKQLQRLSAS. In terms of domain architecture, t-SNARE coiled-coil homology spans 226–288; sequence EEVSVEREKE…EDGLKQLQKA (63 aa). Residues 302–322 form a helical; Anchor for type IV membrane protein membrane-spanning segment; the sequence is SVLVILCFIMLLLLILKEIFL.

This sequence belongs to the syntaxin family. Interacts with VTI12 and SYP61 to form a t-SNARE complex and with VPS45. Interacts with TNO1. Binds to YKT61 and YKT62. Core constituent of the SNARE complex required for membrane fusion at the trans-Golgi network. As to expression, mostly expressed in flowers, to a lower extent in leaves and roots, and, at low levels, in stems.

It is found in the golgi apparatus. Its subcellular location is the trans-Golgi network membrane. Its function is as follows. Contributes to the regulation of secretory and vacuolar transport pathways in the post-Golgi network, and to the maintenance of the Golgi apparatus and trans-Golgi network (TGN) morphologies. Together with VTI12, required for membrane fusion. Vesicle trafficking protein that functions in the secretory pathway and mediates liposome fusion; the fusion of phospholipid vesicles containing SYP41 and VTI12 is triggered by YKT61 and YKT62. Required for extracellular resistance responses to a fungal pathogen. Also involved in the protection of chloroplasts from salicylic acid-dependent biotic stress. The protein is Tlg2p-like protein a of Arabidopsis thaliana (Mouse-ear cress).